A 397-amino-acid chain; its full sequence is Phosphoglycerate kinase (397 aa).

Residues 21 to 23 (DFN), Arg-36, 59 to 62 (HCGR), Arg-118, and Arg-151 each bind substrate. ATP-binding positions include Lys-201, Glu-323, and 353-356 (GGDT).

The protein belongs to the phosphoglycerate kinase family. In terms of assembly, monomer.

The protein resides in the cytoplasm. The catalysed reaction is (2R)-3-phosphoglycerate + ATP = (2R)-3-phospho-glyceroyl phosphate + ADP. Its pathway is carbohydrate degradation; glycolysis; pyruvate from D-glyceraldehyde 3-phosphate: step 2/5. The protein is Phosphoglycerate kinase of Bartonella henselae (strain ATCC 49882 / DSM 28221 / CCUG 30454 / Houston 1) (Rochalimaea henselae).